The sequence spans 432 residues: Proteinase-activated receptor 1 (432 aa).

The signal sequence occupies residues 1–21 (MGPRRLLLVAVGLSLCGPLLS). A propeptide spans 22-45 (SRVPMRQPESERMYATPYATPNPR) (removed for receptor activation). The Extracellular segment spans residues 46-109 (SFFLRNPSED…SGYLTSPWLT (64 aa)). 2 N-linked (GlcNAc...) asparagine glycosylation sites follow: N69 and N82. Residues 110–135 (LFIPSVYTFVFIVSLPLNILAIAVFV) traverse the membrane as a helical segment. Over 136–144 (FRMKVKKPA) the chain is Cytoplasmic. The helical transmembrane segment at 145 to 164 (VVYMLHLAMADVLFVSVLPF) threads the bilayer. The Extracellular segment spans residues 165 to 183 (KISYYFSGTDWQFGSGMCR). The cysteines at positions 182 and 261 are disulfide-linked. The chain crosses the membrane as a helical span at residues 184–205 (FATAACYCNMYASIMLMTVISI). Residues 206 to 225 (DRFLAVVYPIQSLSWRTLGR) are Cytoplasmic-facing. Residues 226–246 (ANFTCVVIWVMAIMGVVPLLL) form a helical membrane-spanning segment. The Extracellular segment spans residues 247–275 (KEQTTQVPGLNITTCHDVLNETLLHGFYS). N-linked (GlcNAc...) asparagine glycosylation is found at N257 and N266. Residues 276–295 (YYFSAFSAIFFLVPLIISTV) form a helical membrane-spanning segment. The Cytoplasmic segment spans residues 296-318 (CYTSIIRCLSSSAVANRSKKSRA). Residues 319 to 341 (LFLSAAVFCIFIVCFGPTNVLLI) form a helical membrane-spanning segment. The Extracellular portion of the chain corresponds to 342–357 (VHYLLLSDSPGTETAY). Residues 358 to 381 (FAYLLCVCVTSVASCIDPLIYYYA) form a helical membrane-spanning segment. At 382-432 (SSECQKHLYSILCCRESSDSNSCNSTGQLMPSKMDTCSSHLNNSIYKKLLA) the chain is on the cytoplasmic side. S425 bears the Phosphoserine mark.

It belongs to the G-protein coupled receptor 1 family. Proteolytic cleavage by thrombin generates a new N-terminus that functions as a tethered ligand. Also proteolytically cleaved by cathepsin CTSG. Post-translationally, phosphorylated in the C-terminal tail; probably mediating desensitization prior to the uncoupling and internalization of the receptor. In terms of tissue distribution, expressed in primary cultured oligodendrocytes.

The protein localises to the cell membrane. High affinity receptor that binds the activated thrombin, leading to calcium release from intracellular stores. The thrombin-activated receptor signaling pathway is mediated through PTX-insensitive G proteins, activation of phospholipase C resulting in the production of 1D-myo-inositol 1,4,5-trisphosphate (InsP3) which binds to InsP3 receptors causing calcium release from the stores. In astrocytes, the calcium released into the cytosol allows the Ca(2+)-dependent release of L-glutamate into the synaptic cleft through BEST1, that targets the neuronal postsynaptic GRIN2A/NMDAR receptor resulting in the synaptic plasticity regulation. May play a role in platelets activation and in vascular development. Mediates up-regulation of pro-inflammatory cytokines, such as MCP-1/CCL2 and IL6, triggered by coagulation factor Xa (F10) in cardiac fibroblasts and umbilical vein endothelial cells. The polypeptide is Proteinase-activated receptor 1 (Rattus norvegicus (Rat)).